We begin with the raw amino-acid sequence, 123 residues long: Small ribosomal subunit protein uS12 (123 aa).

The residue at position 89 (D89) is a 3-methylthioaspartic acid.

Belongs to the universal ribosomal protein uS12 family. In terms of assembly, part of the 30S ribosomal subunit. Contacts proteins S8 and S17. May interact with IF1 in the 30S initiation complex.

In terms of biological role, with S4 and S5 plays an important role in translational accuracy. Functionally, interacts with and stabilizes bases of the 16S rRNA that are involved in tRNA selection in the A site and with the mRNA backbone. Located at the interface of the 30S and 50S subunits, it traverses the body of the 30S subunit contacting proteins on the other side and probably holding the rRNA structure together. The combined cluster of proteins S8, S12 and S17 appears to hold together the shoulder and platform of the 30S subunit. The sequence is that of Small ribosomal subunit protein uS12 from Nitrobacter winogradskyi (strain ATCC 25391 / DSM 10237 / CIP 104748 / NCIMB 11846 / Nb-255).